Consider the following 59-residue polypeptide: Large ribosomal subunit protein bL33 (59 aa).

This sequence belongs to the bacterial ribosomal protein bL33 family.

This chain is Large ribosomal subunit protein bL33, found in Borreliella afzelii (strain PKo) (Borrelia afzelii).